The primary structure comprises 338 residues: Holliday junction branch migration complex subunit RuvB (338 aa).

A large ATPase domain (RuvB-L) region spans residues methionine 1–tyrosine 181. ATP-binding positions include leucine 20, arginine 21, glycine 62, lysine 65, threonine 66, threonine 67, glutamate 128–phenylalanine 130, arginine 171, tyrosine 181, and arginine 218. Threonine 66 is a binding site for Mg(2+). A small ATPAse domain (RuvB-S) region spans residues serine 182–glycine 252. The head domain (RuvB-H) stretch occupies residues serine 255–glutamate 338. DNA-binding residues include arginine 309 and arginine 314.

It belongs to the RuvB family. As to quaternary structure, homohexamer. Forms an RuvA(8)-RuvB(12)-Holliday junction (HJ) complex. HJ DNA is sandwiched between 2 RuvA tetramers; dsDNA enters through RuvA and exits via RuvB. An RuvB hexamer assembles on each DNA strand where it exits the tetramer. Each RuvB hexamer is contacted by two RuvA subunits (via domain III) on 2 adjacent RuvB subunits; this complex drives branch migration. In the full resolvosome a probable DNA-RuvA(4)-RuvB(12)-RuvC(2) complex forms which resolves the HJ.

It localises to the cytoplasm. It catalyses the reaction ATP + H2O = ADP + phosphate + H(+). In terms of biological role, the RuvA-RuvB-RuvC complex processes Holliday junction (HJ) DNA during genetic recombination and DNA repair, while the RuvA-RuvB complex plays an important role in the rescue of blocked DNA replication forks via replication fork reversal (RFR). RuvA specifically binds to HJ cruciform DNA, conferring on it an open structure. The RuvB hexamer acts as an ATP-dependent pump, pulling dsDNA into and through the RuvAB complex. RuvB forms 2 homohexamers on either side of HJ DNA bound by 1 or 2 RuvA tetramers; 4 subunits per hexamer contact DNA at a time. Coordinated motions by a converter formed by DNA-disengaged RuvB subunits stimulates ATP hydrolysis and nucleotide exchange. Immobilization of the converter enables RuvB to convert the ATP-contained energy into a lever motion, pulling 2 nucleotides of DNA out of the RuvA tetramer per ATP hydrolyzed, thus driving DNA branch migration. The RuvB motors rotate together with the DNA substrate, which together with the progressing nucleotide cycle form the mechanistic basis for DNA recombination by continuous HJ branch migration. Branch migration allows RuvC to scan DNA until it finds its consensus sequence, where it cleaves and resolves cruciform DNA. In Campylobacter curvus (strain 525.92), this protein is Holliday junction branch migration complex subunit RuvB.